Consider the following 189-residue polypeptide: Ribosome hibernation promotion factor (189 aa).

Belongs to the HPF/YfiA ribosome-associated protein family. Long HPF subfamily. As to quaternary structure, interacts with 100S ribosomes.

It localises to the cytoplasm. Required for dimerization of active 70S ribosomes into 100S ribosomes in stationary phase; 100S ribosomes are translationally inactive and sometimes present during exponential growth. The polypeptide is Ribosome hibernation promotion factor (Staphylococcus epidermidis (strain ATCC 35984 / DSM 28319 / BCRC 17069 / CCUG 31568 / BM 3577 / RP62A)).